Here is a 448-residue protein sequence, read N- to C-terminus: Bifunctional protein GlmU (448 aa).

A pyrophosphorylase region spans residues 1–229 (MNNHTLNIII…NDEIQGINNL (229 aa)). UDP-N-acetyl-alpha-D-glucosamine is bound by residues 11-14 (LAAG), lysine 25, glutamine 76, 81-82 (GT), 103-105 (YGD), glycine 140, glutamate 154, asparagine 169, and asparagine 227. Aspartate 105 serves as a coordination point for Mg(2+). Asparagine 227 is a Mg(2+) binding site. The segment at 230 to 250 (LQLVRAEKIYQKQQAKLLLLS) is linker. Residues 251 to 448 (GIMIYNPSNF…NEKKQIHKKL (198 aa)) are N-acetyltransferase. Lysine 351 lines the UDP-N-acetyl-alpha-D-glucosamine pocket. Residue histidine 363 is the Proton acceptor of the active site. UDP-N-acetyl-alpha-D-glucosamine is bound by residues tyrosine 366 and asparagine 377. Acetyl-CoA contacts are provided by residues alanine 380, 386–387 (NY), serine 405, and alanine 423.

It in the N-terminal section; belongs to the N-acetylglucosamine-1-phosphate uridyltransferase family. The protein in the C-terminal section; belongs to the transferase hexapeptide repeat family. As to quaternary structure, homotrimer. Requires Mg(2+) as cofactor.

The protein localises to the cytoplasm. It catalyses the reaction alpha-D-glucosamine 1-phosphate + acetyl-CoA = N-acetyl-alpha-D-glucosamine 1-phosphate + CoA + H(+). It carries out the reaction N-acetyl-alpha-D-glucosamine 1-phosphate + UTP + H(+) = UDP-N-acetyl-alpha-D-glucosamine + diphosphate. Its pathway is nucleotide-sugar biosynthesis; UDP-N-acetyl-alpha-D-glucosamine biosynthesis; N-acetyl-alpha-D-glucosamine 1-phosphate from alpha-D-glucosamine 6-phosphate (route II): step 2/2. It participates in nucleotide-sugar biosynthesis; UDP-N-acetyl-alpha-D-glucosamine biosynthesis; UDP-N-acetyl-alpha-D-glucosamine from N-acetyl-alpha-D-glucosamine 1-phosphate: step 1/1. The protein operates within bacterial outer membrane biogenesis; LPS lipid A biosynthesis. Its function is as follows. Catalyzes the last two sequential reactions in the de novo biosynthetic pathway for UDP-N-acetylglucosamine (UDP-GlcNAc). The C-terminal domain catalyzes the transfer of acetyl group from acetyl coenzyme A to glucosamine-1-phosphate (GlcN-1-P) to produce N-acetylglucosamine-1-phosphate (GlcNAc-1-P), which is converted into UDP-GlcNAc by the transfer of uridine 5-monophosphate (from uridine 5-triphosphate), a reaction catalyzed by the N-terminal domain. In Buchnera aphidicola subsp. Baizongia pistaciae (strain Bp), this protein is Bifunctional protein GlmU.